The sequence spans 292 residues: MMPVDVCPRDRGSQWVWLEMGQCYSKKSVVPESDTSERSSMTSGSSESDIPQENKVSKASLDTGQMAFTLAQLESLEICLKEAEEKAKALSEQLSVSEGTKSKLLEQVSRLEEKLEAVDHKEASGGPYEKMVLVKDQCIQKLQAEVKASQEQLIAQKLKHEKKVKKLQTDLATANAITVLELNEKIKTLYEGKPAPREDSLLEGFCGGLPPVEEGDRKISLIMELSTQVSLQTERITQLKEVLEEKERKIQQLEAERSPHPPQEVKDPPGCLPEAPVFSTHDIPPVVSDENL.

A disordered region spans residues 28 to 55; that stretch reads SVVPESDTSERSSMTSGSSESDIPQENK. Residues 38-49 show a composition bias toward low complexity; it reads RSSMTSGSSESD. Coiled coils occupy residues 65–174 and 222–258; these read QMAF…LATA and IMEL…AERS. Over residues 251–267 the composition is skewed to basic and acidic residues; sequence QQLEAERSPHPPQEVKD. Residues 251-292 form a disordered region; it reads QQLEAERSPHPPQEVKDPPGCLPEAPVFSTHDIPPVVSDENL.

This is Coiled-coil domain-containing protein 192 from Homo sapiens (Human).